The chain runs to 509 residues: tRNA-2-methylthio-N(6)-dimethylallyladenosine synthase (509 aa).

The tract at residues 1-21 is disordered; the sequence is MNEKQRIESGQVNPSDKKSEK. In terms of domain architecture, MTTase N-terminal spans 66-184; the sequence is RKFYIRTYGC…LPELLSEAYL (119 aa). Positions 75, 111, 145, 221, 225, and 228 each coordinate [4Fe-4S] cluster. Positions 207-437 constitute a Radical SAM core domain; it reads RTGKIKGWVN…NEVVNEISAK (231 aa). The 64-residue stretch at 440 to 503 folds into the TRAM domain; that stretch reads KEYEGQVVEV…TWSLDGEMVG (64 aa).

The protein belongs to the methylthiotransferase family. MiaB subfamily. As to quaternary structure, monomer. [4Fe-4S] cluster serves as cofactor.

It is found in the cytoplasm. It carries out the reaction N(6)-dimethylallyladenosine(37) in tRNA + (sulfur carrier)-SH + AH2 + 2 S-adenosyl-L-methionine = 2-methylsulfanyl-N(6)-dimethylallyladenosine(37) in tRNA + (sulfur carrier)-H + 5'-deoxyadenosine + L-methionine + A + S-adenosyl-L-homocysteine + 2 H(+). Functionally, catalyzes the methylthiolation of N6-(dimethylallyl)adenosine (i(6)A), leading to the formation of 2-methylthio-N6-(dimethylallyl)adenosine (ms(2)i(6)A) at position 37 in tRNAs that read codons beginning with uridine. This is tRNA-2-methylthio-N(6)-dimethylallyladenosine synthase from Bacillus licheniformis (strain ATCC 14580 / DSM 13 / JCM 2505 / CCUG 7422 / NBRC 12200 / NCIMB 9375 / NCTC 10341 / NRRL NRS-1264 / Gibson 46).